A 247-amino-acid polypeptide reads, in one-letter code: MSKLFWAMLSFITRLPVPRRWSQGLDFEHYSRGIITFPLIGLLLGAISGLVFMVLQAWCGAPLAALFSVLVLALMTGEFHLDGLADTCDGVFSARSRDRMLEIMRDSRLGTHGGLALIFVVLAKILVLSELALRGEPILASLAAACAVSRGTAALLMYRHRYAREEGLGNVFIGKIDGRQTCVTLGLAAIFAAVLLLGMHGVAAMVVTMVAIFILGQLLKRTLDGQTGDTLGAAIELGELVFLLALL.

Transmembrane regions (helical) follow at residues 34–54, 57–77, 113–133, 138–158, and 194–214; these read IITF…VFMV, AWCG…LMTG, GGLA…ELAL, ILAS…LLMY, and VLLL…AIFI.

This sequence belongs to the CobS family. Mg(2+) serves as cofactor.

It localises to the cell inner membrane. The enzyme catalyses alpha-ribazole + adenosylcob(III)inamide-GDP = adenosylcob(III)alamin + GMP + H(+). It catalyses the reaction alpha-ribazole 5'-phosphate + adenosylcob(III)inamide-GDP = adenosylcob(III)alamin 5'-phosphate + GMP + H(+). The protein operates within cofactor biosynthesis; adenosylcobalamin biosynthesis; adenosylcobalamin from cob(II)yrinate a,c-diamide: step 7/7. Joins adenosylcobinamide-GDP and alpha-ribazole to generate adenosylcobalamin (Ado-cobalamin). Also synthesizes adenosylcobalamin 5'-phosphate from adenosylcobinamide-GDP and alpha-ribazole 5'-phosphate. The protein is Adenosylcobinamide-GDP ribazoletransferase of Shigella flexneri serotype 5b (strain 8401).